The following is a 311-amino-acid chain: Endosome-associated-trafficking regulator 1 (311 aa).

The stretch at 167 to 278 (RGNAENGTKN…KSENERLRLG (112 aa)) forms a coiled coil.

It belongs to the ENTR1 family.

The protein resides in the cytoplasm. It localises to the early endosome. The protein localises to the endosome. Its subcellular location is the recycling endosome. It is found in the midbody. The protein resides in the cytoskeleton. It localises to the microtubule organizing center. The protein localises to the centrosome. Its subcellular location is the cilium basal body. Functionally, endosome-associated protein that plays a role in membrane receptor sorting, cytokinesis and ciliogenesis. This is Endosome-associated-trafficking regulator 1 from Danio rerio (Zebrafish).